The sequence spans 760 residues: Photosystem I P700 chlorophyll a apoprotein A1 (760 aa).

The segment at 1–22 (MTISPPESGEKDKKILESPVKA) is disordered. The span at 8–22 (SGEKDKKILESPVKA) shows a compositional bias: basic and acidic residues. A run of 8 helical transmembrane segments spans residues 76-99 (IFSAHFGHLAVIFIWMSAAFFHGA), 162-185 (LMALAIGAVVMAALMLHAGIFHYH), 201-225 (MNHHLAGLLGLGSLAWAGHTIHIGA), 309-327 (IAHHHLAIAVLFIIAGHMY), 368-391 (RHAQLSVNLALLGSLSIIISHHMY), 407-433 (LGLFTHHMWIGGLFIVGAGAHAGIAMV), 455-477 (ALISHLNWVCMWLGFHSFGLYIH), and 551-569 (LMIHHIHAFQIHVTVLILL). [4Fe-4S] cluster-binding residues include Cys593 and Cys602. The next 2 helical transmembrane spans lie at 609–630 (HVFLALFWMYNCLSIVIFHFSW) and 674–696 (ISMYGLMFLGAHFIWAFSLMFLF). His685 contributes to the divinylchlorophyll a' binding site. Residues Met693 and Tyr701 each contribute to the divinyl chlorophyll a site. Trp702 lines the phylloquinone pocket. The chain crosses the membrane as a helical span at residues 734-754 (AVGVTHFLVGGIATTWAFFHA).

It belongs to the PsaA/PsaB family. The PsaA/B heterodimer binds the P700 divinyl chlorophyll special pair and subsequent electron acceptors. PSI consists of a core antenna complex that captures photons, and an electron transfer chain that converts photonic excitation into a charge separation. The cyanobacterial PSI reaction center is composed of one copy each of PsaA,B,C,D,E,F,I,J,K,L,M and X, and forms trimeric complexes. PSI electron transfer chain: 5 divinyl chlorophyll a, 1 divinyl chlorophyll a', 2 phylloquinones and 3 4Fe-4S clusters. PSI core antenna: 90 divinyl chlorophyll a, 22 carotenoids, 3 phospholipids and 1 galactolipid. P700 is a divinyl chlorophyll a/divinyl chlorophyll a' dimer, A0 is one or more divinyl chlorophyll a, A1 is one or both phylloquinones and FX is a shared 4Fe-4S iron-sulfur center. serves as cofactor.

It localises to the cellular thylakoid membrane. It carries out the reaction reduced [plastocyanin] + hnu + oxidized [2Fe-2S]-[ferredoxin] = oxidized [plastocyanin] + reduced [2Fe-2S]-[ferredoxin]. Its function is as follows. PsaA and PsaB bind P700, the primary electron donor of photosystem I (PSI), as well as the electron acceptors A0, A1 and FX. PSI is a plastocyanin/cytochrome c6-ferredoxin oxidoreductase, converting photonic excitation into a charge separation, which transfers an electron from the donor P700 chlorophyll pair to the spectroscopically characterized acceptors A0, A1, FX, FA and FB in turn. Oxidized P700 is reduced on the lumenal side of the thylakoid membrane by plastocyanin or cytochrome c6. The polypeptide is Photosystem I P700 chlorophyll a apoprotein A1 (Prochlorococcus marinus (strain MIT 9515)).